Consider the following 385-residue polypeptide: Multidrug resistance protein MdtE (385 aa).

The signal sequence occupies residues 1 to 20; sequence MNRRRKLLIPLLFCGAMLTA. A lipid anchor (N-palmitoyl cysteine) is attached at cysteine 21. Cysteine 21 is lipidated: S-diacylglycerol cysteine.

Belongs to the membrane fusion protein (MFP) (TC 8.A.1) family. In terms of assembly, homotrimer. Part of the tripartite efflux system MdtEF-TolC, which is composed of an inner membrane transporter, MdtF, a membrane fusion protein, MdtE, and an outer membrane component, TolC. The complex forms a large protein conduit and can translocate molecules across both the inner and outer membranes.

The protein resides in the cell inner membrane. In terms of biological role, part of the tripartite efflux system MdtEF-TolC, which confers resistance to various compounds. This is Multidrug resistance protein MdtE (mdtE) from Escherichia coli O157:H7.